We begin with the raw amino-acid sequence, 523 residues long: Putative oxidoreductase TDA3 (523 aa).

Positions 157-172 (NSSLSSSGSSLKNDSA) are enriched in low complexity. Positions 157–189 (NSSLSSSGSSLKNDSASNEEEGSDIHVSSSVPS) are disordered. 3 positions are modified to phosphoserine: Ser-189, Ser-204, and Ser-306.

It belongs to the TDA3 family. Interacts with BTN2.

The protein resides in the cytoplasm. The protein localises to the late endosome. Functionally, putative oxidoreductase that negatively regulates the retrieval of cargo from late endosomes to the Golgi. Regulates YIF1 and KEX2 localization. Required for fast DNA replication. The polypeptide is Putative oxidoreductase TDA3 (TDA3) (Saccharomyces cerevisiae (strain ATCC 204508 / S288c) (Baker's yeast)).